Consider the following 356-residue polypeptide: Heat-inducible transcription repressor HrcA (356 aa).

It belongs to the HrcA family.

Its function is as follows. Negative regulator of class I heat shock genes (grpE-dnaK-dnaJ and groELS operons). Prevents heat-shock induction of these operons. The sequence is that of Heat-inducible transcription repressor HrcA from Chelativorans sp. (strain BNC1).